The primary structure comprises 358 residues: tRNA-specific 2-thiouridylase MnmA (358 aa).

ATP is bound by residues 6–13 (ALSGGVDS) and M32. Residue C103 is the Nucleophile of the active site. A disulfide bridge links C103 with C201. Position 127 (G127) interacts with ATP. Residues 151–153 (KDQ) form an interaction with tRNA region. C201 serves as the catalytic Cysteine persulfide intermediate.

Belongs to the MnmA/TRMU family.

The protein resides in the cytoplasm. It catalyses the reaction S-sulfanyl-L-cysteinyl-[protein] + uridine(34) in tRNA + AH2 + ATP = 2-thiouridine(34) in tRNA + L-cysteinyl-[protein] + A + AMP + diphosphate + H(+). Its function is as follows. Catalyzes the 2-thiolation of uridine at the wobble position (U34) of tRNA, leading to the formation of s(2)U34. This Thermotoga petrophila (strain ATCC BAA-488 / DSM 13995 / JCM 10881 / RKU-1) protein is tRNA-specific 2-thiouridylase MnmA.